The primary structure comprises 494 residues: UPF0371 protein SpyM3_1021 (494 aa).

Belongs to the UPF0371 family.

This chain is UPF0371 protein SpyM3_1021, found in Streptococcus pyogenes serotype M3 (strain ATCC BAA-595 / MGAS315).